The primary structure comprises 319 residues: HTH-type transcriptional regulator YidZ (319 aa).

Residues 8 to 65 (LDLNLLLCLQLLMQERSVTKAAKRMNVTPSAVSKSLAKLRAWFDDPLFVNSPLGLSPT) enclose the HTH lysR-type domain. A DNA-binding region (H-T-H motif) is located at residues 25–44 (VTKAAKRMNVTPSAVSKSLA).

Belongs to the LysR transcriptional regulatory family.

In terms of biological role, involved in anaerobic NO protection. This chain is HTH-type transcriptional regulator YidZ, found in Escherichia coli O157:H7 (strain EC4115 / EHEC).